We begin with the raw amino-acid sequence, 489 residues long: Lysine-specific permease LysP (489 aa).

At 2–22 the chain is on the cytoplasmic side; that stretch reads VSETKTTEAPGLRRELKARHL. The helical transmembrane segment at 23 to 43 threads the bilayer; sequence TMIAIGGSIGTGLFVASGATI. Over 44-45 the chain is Periplasmic; sequence SQ. Residues 46–66 traverse the membrane as a helical segment; it reads AGPGGALLSYMLIGLMVYFLM. The Cytoplasmic portion of the chain corresponds to 67-105; sequence TSLGELAAYMPVSGSFATYGQNYVEEGFGFALGWNYWYN. The chain crosses the membrane as a helical span at residues 106 to 126; that stretch reads WAVTIAVDLVAAQLVMSWWFP. The Periplasmic segment spans residues 127 to 128; it reads DT. The helical transmembrane segment at 129 to 149 threads the bilayer; sequence PGWIWSALFLGVIFLLNYISV. Residues 150–161 are Cytoplasmic-facing; sequence RGFGEAEYWFSL. A helical membrane pass occupies residues 162 to 182; that stretch reads IKVTTVIVFIIVGVLMIIGIF. The Periplasmic segment spans residues 183–197; sequence KGAQPAGWSNWTIGE. A helical membrane pass occupies residues 198-218; it reads APFAGGFAAMIGVAMIVGFSF. Topologically, residues 219 to 244 are cytoplasmic; that stretch reads QGTELIGIAAGESEDPAKNIPRAVRQ. A helical membrane pass occupies residues 245-265; sequence VFWRILLFYVFAILIISLIIP. Residues 266–290 lie on the Periplasmic side of the membrane; it reads YTDPSLLRNDVKDISVSPFTLVFQH. Residues 291–311 traverse the membrane as a helical segment; sequence AGLLSAAAVMNAVILTAVLSA. The Cytoplasmic portion of the chain corresponds to 312–346; that stretch reads GNSGMYASTRMLYTLACDGKAPRIFAKLSRGGVPR. The chain crosses the membrane as a helical span at residues 347-367; the sequence is NALYATTVIAGLCFLTSMFGN. At 368–370 the chain is on the periplasmic side; it reads QTV. A helical membrane pass occupies residues 371–391; that stretch reads YLWLLNTSGMTGFIAWLGIAI. Over 392 to 413 the chain is Cytoplasmic; sequence SHYRFRRGYVLQGHDINDLPYR. Residues 414 to 434 form a helical membrane-spanning segment; that stretch reads SGFFPLGPIFAFILCLIITLG. The Periplasmic segment spans residues 435-446; it reads QNYEAFLKDTID. Residues 447–467 traverse the membrane as a helical segment; that stretch reads WGGVAATYIGIPLFLIIWFGY. The Cytoplasmic portion of the chain corresponds to 468-489; it reads KLIKGTHFVRYSEMKFPQNDKK.

It belongs to the amino acid-polyamine-organocation (APC) superfamily. Amino acid transporter (AAT) (TC 2.A.3.1) family. Interacts strongly with the transcriptional activator CadC in the absence of lysine or at low lysine concentrations. Interaction is markedly attenuated under increasing lysine levels. Concomitant pH-dependent protonation of periplasmic amino acids in both proteins dissolves their electrostatic connections resulting in further destabilization of the CadC/LysP interaction. Low pH promotes oligomerization of LysP.

The protein localises to the cell inner membrane. The catalysed reaction is L-lysine(out) + H(+)(out) = L-lysine(in) + H(+)(in). Functionally, permease involved in lysine uptake. In addition, functions as a lysine sensor that mediates the lysine-dependent regulation of the transcriptional activator CadC. In the absence of lysine, or at low lysine concentrations, LysP inhibits CadC by an interaction with the transmembrane domain of CadC. In the presence of lysine, LysP loses its ability to interact with and inhibit CadC, and acts as a lysine permease. This is Lysine-specific permease LysP from Escherichia coli (strain K12).